The following is a 356-amino-acid chain: uncharacterized protein (356 aa).

A signal peptide spans 1 to 21 (MKLITAPCRALLALPFCYAFS).

This is an uncharacterized protein from Escherichia coli (strain K12).